A 4516-amino-acid chain; its full sequence is Dynein axonemal heavy chain 1 (4516 aa).

A stem region spans residues 1 to 1748 (MVTLSISDTL…YIRAVNAEFI (1748 aa)). The tract at residues 78 to 160 (SSGSDKSLKN…RKSPLAGTDK (83 aa)) is disordered. 2 stretches are compositionally biased toward basic and acidic residues: residues 83 to 97 (KSLK…KEEA) and 113 to 129 (ENHD…RNPE). AAA regions lie at residues 1749-1956 (YGYE…VISA), 2016-2249 (QAIR…TTVK), 2422-2682 (TMMP…VFQG), and 2780-2972 (DYNQ…CCTI). A GPAGTGKT motif motif is present at residues 1787–1794 (GPAGTGKT). Residue 1787–1794 (GPAGTGKT) participates in ATP binding. Positions 1837–1843 (CFDEFNR) match the CFDEFNR motif motif. Residues 2054 to 2061 (GPTGSGKS), 2460 to 2467 (GPTGTGKT), and 2819 to 2826 (GVGGSGRS) contribute to the ATP site. Positions 2987–3285 (ATRFLHEIPE…MHKYHFVAKA (299 aa)) are stalk. Positions 3293 to 3394 (LREAQDDLEV…QDTVENLENM (102 aa)) form a coiled coil. AAA regions lie at residues 3388–3618 (VENL…EERP) and 3831–4050 (LPAF…SYNS).

It belongs to the dynein heavy chain family. Consists of at least two heavy chains and a number of intermediate and light chains. Expressed in brain.

It localises to the cytoplasm. It is found in the cytoskeleton. The protein localises to the cilium axoneme. Its subcellular location is the cell projection. The protein resides in the cilium. It localises to the flagellum. Force generating protein of cilia required for sperm flagellum motility. Produces force towards the minus ends of microtubules. Dynein has ATPase activity; the force-producing power stroke is thought to occur on release of ADP. Required in spermatozoa for the formation of the inner dynein arms and biogenesis of the axoneme. This chain is Dynein axonemal heavy chain 1, found in Rattus norvegicus (Rat).